The following is a 907-amino-acid chain: Protein translocase subunit SecA (907 aa).

ATP is bound by residues Gln-87, 105–109 (GEGKT), and Asp-512. Zn(2+) contacts are provided by Cys-891, Cys-893, Cys-902, and His-903.

Belongs to the SecA family. As to quaternary structure, monomer and homodimer. Part of the essential Sec protein translocation apparatus which comprises SecA, SecYEG and auxiliary proteins SecDF-YajC and YidC. It depends on Zn(2+) as a cofactor.

It localises to the cell inner membrane. The protein resides in the cytoplasm. It carries out the reaction ATP + H2O + cellular proteinSide 1 = ADP + phosphate + cellular proteinSide 2.. Its function is as follows. Part of the Sec protein translocase complex. Interacts with the SecYEG preprotein conducting channel. Has a central role in coupling the hydrolysis of ATP to the transfer of proteins into and across the cell membrane, serving both as a receptor for the preprotein-SecB complex and as an ATP-driven molecular motor driving the stepwise translocation of polypeptide chains across the membrane. The polypeptide is Protein translocase subunit SecA (Shewanella loihica (strain ATCC BAA-1088 / PV-4)).